The following is a 283-amino-acid chain: Diaminopimelate epimerase (283 aa).

Substrate contacts are provided by asparagine 11 and asparagine 65. Catalysis depends on cysteine 74, which acts as the Proton donor. Substrate-binding positions include 75-76 (GN), asparagine 163, asparagine 196, and 214-215 (ER). Catalysis depends on cysteine 223, which acts as the Proton acceptor. Residue 224-225 (GT) coordinates substrate.

The protein belongs to the diaminopimelate epimerase family. In terms of assembly, homodimer.

It localises to the cytoplasm. The enzyme catalyses (2S,6S)-2,6-diaminopimelate = meso-2,6-diaminopimelate. The protein operates within amino-acid biosynthesis; L-lysine biosynthesis via DAP pathway; DL-2,6-diaminopimelate from LL-2,6-diaminopimelate: step 1/1. In terms of biological role, catalyzes the stereoinversion of LL-2,6-diaminopimelate (L,L-DAP) to meso-diaminopimelate (meso-DAP), a precursor of L-lysine and an essential component of the bacterial peptidoglycan. In Desulfitobacterium hafniense (strain DSM 10664 / DCB-2), this protein is Diaminopimelate epimerase.